We begin with the raw amino-acid sequence, 185 residues long: dTTP/UTP pyrophosphatase (185 aa).

Catalysis depends on Asp64, which acts as the Proton acceptor.

The protein belongs to the Maf family. YhdE subfamily. A divalent metal cation is required as a cofactor.

The protein resides in the cytoplasm. It carries out the reaction dTTP + H2O = dTMP + diphosphate + H(+). The enzyme catalyses UTP + H2O = UMP + diphosphate + H(+). Nucleoside triphosphate pyrophosphatase that hydrolyzes dTTP and UTP. May have a dual role in cell division arrest and in preventing the incorporation of modified nucleotides into cellular nucleic acids. This Thermococcus gammatolerans (strain DSM 15229 / JCM 11827 / EJ3) protein is dTTP/UTP pyrophosphatase.